We begin with the raw amino-acid sequence, 285 residues long: Undecaprenyl-diphosphatase (285 aa).

7 helical membrane-spanning segments follow: residues 40-60 (GPLIDVAVHVGSLLAIIVYFF), 89-109 (LFWWIVLGTIPAVAFGLAIKL), 137-157 (DLIAFNLIVYGIALGLADWLG), 171-191 (GLIVGIAQALAIIPGTSRSGV), 209-229 (FSFLLSIPAVAGAGVLIVPEI), 241-261 (LIAGVLTFIAAFLTMAFLMNF), and 265-285 (ASMLVFVFYRVAMGCALLAFF).

This sequence belongs to the UppP family.

It localises to the cell inner membrane. It carries out the reaction di-trans,octa-cis-undecaprenyl diphosphate + H2O = di-trans,octa-cis-undecaprenyl phosphate + phosphate + H(+). Functionally, catalyzes the dephosphorylation of undecaprenyl diphosphate (UPP). Confers resistance to bacitracin. The polypeptide is Undecaprenyl-diphosphatase (Erythrobacter litoralis (strain HTCC2594)).